The sequence spans 127 residues: Small ribosomal subunit protein uS11 (127 aa).

The protein belongs to the universal ribosomal protein uS11 family. As to quaternary structure, part of the 30S ribosomal subunit. Interacts with proteins S7 and S18. Binds to IF-3.

Located on the platform of the 30S subunit, it bridges several disparate RNA helices of the 16S rRNA. Forms part of the Shine-Dalgarno cleft in the 70S ribosome. This Streptococcus mutans serotype c (strain ATCC 700610 / UA159) protein is Small ribosomal subunit protein uS11.